A 415-amino-acid chain; its full sequence is Serine/threonine transporter SstT (415 aa).

The next 8 membrane-spanning stretches (helical) occupy residues 21-41, 45-65, 85-105, 142-162, 193-213, 217-237, 289-309, and 331-351; these read ILLG…AALA, LGTL…LVLV, FLYL…SVLF, ALLN…GIAF, LGIF…ALWG, LLMV…PLIV, VAIP…ITVL, and VVAS…LLLI.

This sequence belongs to the dicarboxylate/amino acid:cation symporter (DAACS) (TC 2.A.23) family.

The protein localises to the cell inner membrane. The catalysed reaction is L-serine(in) + Na(+)(in) = L-serine(out) + Na(+)(out). It carries out the reaction L-threonine(in) + Na(+)(in) = L-threonine(out) + Na(+)(out). Its function is as follows. Involved in the import of serine and threonine into the cell, with the concomitant import of sodium (symport system). This chain is Serine/threonine transporter SstT, found in Pectobacterium atrosepticum (strain SCRI 1043 / ATCC BAA-672) (Erwinia carotovora subsp. atroseptica).